The chain runs to 920 residues: Dynamin-B (920 aa).

The tract at residues 65-84 (NSNNNNNNNNNNKINKNNNN) is disordered. The 295-residue stretch at 154–448 (EITLPQIIVV…LTKHIRDTFP (295 aa)) folds into the Dynamin-type G domain. The segment at 164–171 (GSQSSGKS) is G1 motif. 164–172 (GSQSSGKSS) lines the GTP pocket. The tract at residues 190-192 (VTR) is G2 motif. Positions 204–241 (TTSRNNVNENEDEDEDDNYYDNDNDDNSLEEWGEFGHT) are disordered. The span at 212–236 (ENEDEDEDDNYYDNDNDDNSLEEWG) shows a compositional bias: acidic residues. Residues 290–293 (DLPG) are G3 motif. Residues 359-362 (TKLD) are G4 motif. Residues 359–365 (TKLDLMD) and 390–393 (NRSQ) each bind GTP. Positions 389–392 (VNRS) are G5 motif. Residues 680–790 (FQSTSSTSSS…EIQIQQQQQQ (111 aa)) form a disordered region. Composition is skewed to low complexity over residues 681–705 (QSTS…NSNP) and 724–751 (QIKQ…QKQQ). A coiled-coil region spans residues 724–751 (QIKQQQQQQQQQQQQSYQQQQQQQQKQQ). Residues 765–774 (PPSPPSPPQP) are compositionally biased toward pro residues. The segment covering 775 to 790 (KQQQSHEIQIQQQQQQ) has biased composition (low complexity). One can recognise a GED domain in the interval 825 to 916 (IYLLRRLLLA…SLSQSENSDL (92 aa)).

This sequence belongs to the TRAFAC class dynamin-like GTPase superfamily. Dynamin/Fzo/YdjA family.

The protein resides in the cytoplasm. Enzyme hydrolyzing GTP. In Dictyostelium discoideum (Social amoeba), this protein is Dynamin-B (dymB).